The primary structure comprises 559 residues: uncharacterized protein (559 aa).

Residues 1-10 (MSGRRGDHPG) are compositionally biased toward basic and acidic residues. Residues 1–76 (MSGRRGDHPG…ERSRVPPRTT (76 aa)) form a disordered region. 11 helical membrane-spanning segments follow: residues 128–148 (FAVD…AAAS), 155–175 (VALY…LIGP), 186–206 (VALA…IMNY), 208–228 (GATG…MMVF), 259–279 (VFGL…VEFV), 283–303 (LFQL…GASL), 358–378 (LWGN…PAFV), 387–407 (WVQL…NFAG), 428–448 (VLVT…ATAI), 490–510 (LAWV…WVGF), and 515–535 (ALLI…SLIP).

The protein to M.leprae ML2143.

It is found in the cell membrane. This is an uncharacterized protein from Mycobacterium tuberculosis (strain CDC 1551 / Oshkosh).